The chain runs to 201 residues: 3-isopropylmalate dehydratase small subunit (201 aa).

The protein belongs to the LeuD family. LeuD type 1 subfamily. As to quaternary structure, heterodimer of LeuC and LeuD.

It carries out the reaction (2R,3S)-3-isopropylmalate = (2S)-2-isopropylmalate. Its pathway is amino-acid biosynthesis; L-leucine biosynthesis; L-leucine from 3-methyl-2-oxobutanoate: step 2/4. In terms of biological role, catalyzes the isomerization between 2-isopropylmalate and 3-isopropylmalate, via the formation of 2-isopropylmaleate. The sequence is that of 3-isopropylmalate dehydratase small subunit from Agrobacterium fabrum (strain C58 / ATCC 33970) (Agrobacterium tumefaciens (strain C58)).